The chain runs to 221 residues: NAD(P)H-hydrate epimerase (221 aa).

The region spanning 10–210 is the YjeF N-terminal domain; it reads MQQIDNYTIE…DVGMLIPDDF (201 aa). 58–62 contributes to the (6S)-NADPHX binding site; the sequence is NNGAD. Residues N59 and D120 each coordinate K(+). (6S)-NADPHX-binding positions include 124–130 and D153; that span reads GVGLNNV. T156 serves as a coordination point for K(+).

Belongs to the NnrE/AIBP family. K(+) is required as a cofactor.

The enzyme catalyses (6R)-NADHX = (6S)-NADHX. It carries out the reaction (6R)-NADPHX = (6S)-NADPHX. Its function is as follows. Catalyzes the epimerization of the S- and R-forms of NAD(P)HX, a damaged form of NAD(P)H that is a result of enzymatic or heat-dependent hydration. This is a prerequisite for the S-specific NAD(P)H-hydrate dehydratase to allow the repair of both epimers of NAD(P)HX. The polypeptide is NAD(P)H-hydrate epimerase (Leuconostoc mesenteroides subsp. mesenteroides (strain ATCC 8293 / DSM 20343 / BCRC 11652 / CCM 1803 / JCM 6124 / NCDO 523 / NBRC 100496 / NCIMB 8023 / NCTC 12954 / NRRL B-1118 / 37Y)).